The chain runs to 488 residues: Tetratricopeptide repeat protein 23 (488 aa).

TPR repeat units lie at residues 45 to 78 (LHLCEERAKSYSSSREYKQAIQELVRCVALTRIC), 137 to 170 (LELFYTLGRALLSLQKFKDASENLIKAERLSKEM), 186 to 219 (SRIKLSFAQLYQGQKRSKEAFPFYQKALEYTEIT), 228 to 261 (VQVLRELAGVEQALGLYAAAISHFSRDRLPTPQP), and 398 to 431 (AETYRALGRADLAQGNNSGAYAKLKKCVQIETFL).

As to quaternary structure, associated with the EvC complex composed of EFCAB7, IQCE, EVC2 and EVC.

It localises to the cell projection. It is found in the cilium. Functionally, participates positively in the ciliary Hedgehog (Hh) signaling. In Mus musculus (Mouse), this protein is Tetratricopeptide repeat protein 23 (Ttc23).